The chain runs to 234 residues: Phosphoglycolate phosphatase (234 aa).

The active-site Nucleophile is the Asp-9. 2 residues coordinate Mg(2+): Asp-9 and Asp-11. Lys-162 is a substrate binding site. Positions 185 and 189 each coordinate Mg(2+).

This sequence belongs to the archaeal SPP-like hydrolase family. Mg(2+) serves as cofactor.

The catalysed reaction is 2-phosphoglycolate + H2O = glycolate + phosphate. Catalyzes the dephosphorylation of 2-phosphoglycolate. This Methanobrevibacter smithii (strain ATCC 35061 / DSM 861 / OCM 144 / PS) protein is Phosphoglycolate phosphatase.